The primary structure comprises 480 residues: Ribosomal RNA small subunit methyltransferase F (480 aa).

S-adenosyl-L-methionine contacts are provided by residues 125-131 (AAAPGSK), E149, D176, and D194. The active-site Nucleophile is C247.

The protein belongs to the class I-like SAM-binding methyltransferase superfamily. RsmB/NOP family.

It localises to the cytoplasm. The catalysed reaction is cytidine(1407) in 16S rRNA + S-adenosyl-L-methionine = 5-methylcytidine(1407) in 16S rRNA + S-adenosyl-L-homocysteine + H(+). Specifically methylates the cytosine at position 1407 (m5C1407) of 16S rRNA. In Enterobacter sp. (strain 638), this protein is Ribosomal RNA small subunit methyltransferase F.